Here is a 274-residue protein sequence, read N- to C-terminus: uncharacterized protein (274 aa).

This is an uncharacterized protein from Acidianus hospitalis (AFV-1).